A 77-amino-acid chain; its full sequence is Small ribosomal subunit protein bS18 (77 aa).

Belongs to the bacterial ribosomal protein bS18 family. Part of the 30S ribosomal subunit. Forms a tight heterodimer with protein bS6.

In terms of biological role, binds as a heterodimer with protein bS6 to the central domain of the 16S rRNA, where it helps stabilize the platform of the 30S subunit. The polypeptide is Small ribosomal subunit protein bS18 (Bacillus cytotoxicus (strain DSM 22905 / CIP 110041 / 391-98 / NVH 391-98)).